The primary structure comprises 460 residues: Equilibrative nucleoside transporter 1 (460 aa).

Residues 1–12 lie on the Cytoplasmic side of the membrane; the sequence is MTTSHQPQDRYK. Residues 13 to 29 traverse the membrane as a helical segment; the sequence is AVWLIFFVLGLGTLLPW. The Extracellular portion of the chain corresponds to 30 to 82; that stretch reads NFFMTATKYFTNRLDVSQNVSSDTDQSCESTKALADPTVALPARSSLSAIFNN. Asn-48 is a glycosylation site (N-linked (GlcNAc...) asparagine). Residues 83–107 traverse the membrane as a helical segment; the sequence is VMTLCAMLPLLVFTCLNSFLHQRIS. At 108–111 the chain is on the cytoplasmic side; the sequence is QSVR. Residues 112–130 form a helical membrane-spanning segment; the sequence is ILGSLLAILLVFLVTAALV. At 131–138 the chain is on the extracellular side; it reads KVEMDALI. Residues 139–157 traverse the membrane as a helical segment; the sequence is FFVITMIKIVLINSFGAIL. The Cytoplasmic segment spans residues 158-174; it reads QASLFGLAGVLPANYTA. The helical transmembrane segment at 175–199 threads the bilayer; the sequence is PIMSGQGLAGFFTSVAMICAIASGS. Topologically, residues 200 to 206 are extracellular; it reads ELSESAF. A helical membrane pass occupies residues 207–227; sequence GYFITACAVVILAILCYLALP. The Cytoplasmic segment spans residues 228–291; sequence RTEFYRHYLQ…IKAILKSICV (64 aa). At Ser-254 the chain carries Phosphoserine. Residues 255–266 are compositionally biased toward basic and acidic residues; sequence KGEEPKGRREES. A disordered region spans residues 255-277; the sequence is KGEEPKGRREESGVPGPNSPPTN. Ser-273 bears the Phosphoserine mark. A helical transmembrane segment spans residues 292–311; it reads PALSVCFIFTVTIGLFPAVT. Over 312–323 the chain is Extracellular; that stretch reads AEVESSIAGTSP. The chain crosses the membrane as a helical span at residues 324–342; the sequence is WKSYFIPVACFLNFNVFDW. Residues 343–359 lie on the Cytoplasmic side of the membrane; it reads LGRSLTAVCMWPGQDSR. Residues 360-378 traverse the membrane as a helical segment; sequence WLPVLVASRIVFIPLLMLC. Residues 379-397 are Extracellular-facing; that stretch reads NVKARHCGAQRHHFVFKHD. A helical transmembrane segment spans residues 398–417; that stretch reads AWFIAFMAAFAFSNGYLASL. Topologically, residues 418 to 435 are cytoplasmic; the sequence is CMCFGPKKVKPAEAETAG. Residues 436–456 traverse the membrane as a helical segment; that stretch reads NIMSFFLCLGLALGAVLSFLL. Topologically, residues 457-460 are extracellular; that stretch reads RALV.

The protein belongs to the SLC29A/ENT transporter (TC 2.A.57) family. Identified in a complex with STOM. In terms of processing, glycosylated. In terms of tissue distribution, highly expressed in heart, spleen, lung, liver and testis. Lower level of expression in brain and kidney. Expressed in adipose tissues, brown adipocytes expressing significantly higher amounts than white adipocytes. Expressed in seminiferous tubules.

It localises to the basolateral cell membrane. It is found in the apical cell membrane. The protein resides in the cell membrane. The enzyme catalyses adenosine(in) = adenosine(out). The catalysed reaction is guanosine(in) = guanosine(out). It carries out the reaction inosine(in) = inosine(out). It catalyses the reaction uridine(out) = uridine(in). The enzyme catalyses thymidine(in) = thymidine(out). The catalysed reaction is cytidine(in) = cytidine(out). It carries out the reaction adenine(out) = adenine(in). It catalyses the reaction guanine(out) = guanine(in). The enzyme catalyses thymine(out) = thymine(in). The catalysed reaction is uracil(in) = uracil(out). It carries out the reaction hypoxanthine(out) = hypoxanthine(in). Transporter activity is sensitive to low concentrations of the inhibitor nitrobenzylmercaptopurine riboside (NBMPR). In terms of biological role, uniporter involved in the facilitative transport of nucleosides and nucleobases, and contributes to maintaining their cellular homeostasis. Functions as a Na(+)-independent transporter. Involved in the transport of nucleosides such as adenosine, guanosine, inosine, uridine, thymidine and cytidine. Also transports purine (hypoxanthine, adenine, guanine) and pyrimidine nucleobases (thymine, uracil). Mediates basolateral nucleoside uptake into Sertoli cells, thereby regulating the transport of nucleosides in testis across the blood-testis-barrier. Regulates inosine levels in brown adipocytes tissues (BAT) and extracellular inosine levels, which controls BAT-dependent energy expenditure. The chain is Equilibrative nucleoside transporter 1 from Mus musculus (Mouse).